The primary structure comprises 262 residues: Pyridoxine 5'-phosphate synthase (262 aa).

Asn6 contributes to the 3-amino-2-oxopropyl phosphate binding site. 8 to 9 (DH) provides a ligand contact to 1-deoxy-D-xylulose 5-phosphate. Residue Arg17 coordinates 3-amino-2-oxopropyl phosphate. His43 functions as the Proton acceptor in the catalytic mechanism. Residues Arg45 and His50 each coordinate 1-deoxy-D-xylulose 5-phosphate. Glu70 serves as the catalytic Proton acceptor. Thr102 is a 1-deoxy-D-xylulose 5-phosphate binding site. The active-site Proton donor is His215. Residues Gly216 and 237-238 (GH) contribute to the 3-amino-2-oxopropyl phosphate site.

The protein belongs to the PNP synthase family. As to quaternary structure, homooctamer; tetramer of dimers.

It is found in the cytoplasm. The catalysed reaction is 3-amino-2-oxopropyl phosphate + 1-deoxy-D-xylulose 5-phosphate = pyridoxine 5'-phosphate + phosphate + 2 H2O + H(+). It participates in cofactor biosynthesis; pyridoxine 5'-phosphate biosynthesis; pyridoxine 5'-phosphate from D-erythrose 4-phosphate: step 5/5. In terms of biological role, catalyzes the complicated ring closure reaction between the two acyclic compounds 1-deoxy-D-xylulose-5-phosphate (DXP) and 3-amino-2-oxopropyl phosphate (1-amino-acetone-3-phosphate or AAP) to form pyridoxine 5'-phosphate (PNP) and inorganic phosphate. This chain is Pyridoxine 5'-phosphate synthase, found in Helicobacter pylori (strain HPAG1).